Here is a 290-residue protein sequence, read N- to C-terminus: Undecaprenyl-diphosphatase (290 aa).

6 helical membrane-spanning segments follow: residues 39-59 (PGAA…LIYF), 85-105 (AQMG…GITL), 118-138 (LIAT…RLAA), 202-222 (SFLL…KDVG), 230-250 (PTIF…AWFM), and 261-281 (FVIY…AGVL).

Belongs to the UppP family.

Its subcellular location is the cell membrane. The catalysed reaction is di-trans,octa-cis-undecaprenyl diphosphate + H2O = di-trans,octa-cis-undecaprenyl phosphate + phosphate + H(+). Functionally, catalyzes the dephosphorylation of undecaprenyl diphosphate (UPP). Confers resistance to bacitracin. In Streptomyces griseus subsp. griseus (strain JCM 4626 / CBS 651.72 / NBRC 13350 / KCC S-0626 / ISP 5235), this protein is Undecaprenyl-diphosphatase.